Here is a 670-residue protein sequence, read N- to C-terminus: UvrABC system protein B (670 aa).

One can recognise a Helicase ATP-binding domain in the interval 26-414 (EGLEDGLAHQ…GGDVIDQVVR (389 aa)). An ATP-binding site is contributed by 39 to 46 (GVTGSGKT). A Beta-hairpin motif is present at residues 92 to 115 (YYDYYQPEAYVPSSDTFIEKDASV). A Helicase C-terminal domain is found at 431 to 597 (QVDDLLSEIR…GINKKISDIL (167 aa)). The UVR domain occupies 630–665 (ELKIRELESKMLTHAQNLEFEEAAALRDEVQVLRAQ).

It belongs to the UvrB family. As to quaternary structure, forms a heterotetramer with UvrA during the search for lesions. Interacts with UvrC in an incision complex.

It is found in the cytoplasm. In terms of biological role, the UvrABC repair system catalyzes the recognition and processing of DNA lesions. A damage recognition complex composed of 2 UvrA and 2 UvrB subunits scans DNA for abnormalities. Upon binding of the UvrA(2)B(2) complex to a putative damaged site, the DNA wraps around one UvrB monomer. DNA wrap is dependent on ATP binding by UvrB and probably causes local melting of the DNA helix, facilitating insertion of UvrB beta-hairpin between the DNA strands. Then UvrB probes one DNA strand for the presence of a lesion. If a lesion is found the UvrA subunits dissociate and the UvrB-DNA preincision complex is formed. This complex is subsequently bound by UvrC and the second UvrB is released. If no lesion is found, the DNA wraps around the other UvrB subunit that will check the other stand for damage. The polypeptide is UvrABC system protein B (Pectobacterium atrosepticum (strain SCRI 1043 / ATCC BAA-672) (Erwinia carotovora subsp. atroseptica)).